The following is a 372-amino-acid chain: Peptide chain release factor 1 (372 aa).

Gln237 bears the N5-methylglutamine mark.

The protein belongs to the prokaryotic/mitochondrial release factor family. In terms of processing, methylated by PrmC. Methylation increases the termination efficiency of RF1.

The protein resides in the cytoplasm. Functionally, peptide chain release factor 1 directs the termination of translation in response to the peptide chain termination codons UAG and UAA. The protein is Peptide chain release factor 1 of Anaeromyxobacter sp. (strain Fw109-5).